The primary structure comprises 553 residues: uncharacterized protein (553 aa).

Positions 26 to 109 (RFEFVGWGSR…YDLLEKHYKE (84 aa)) constitute an SWIB/MDM2 domain. The Plus3 domain occupies 150-275 (AIVSDNIKLL…KAKKLHKDQT (126 aa)). Disordered stretches follow at residues 335 to 357 (QNPEVSSPEAHKSDNEQRLSESP) and 447 to 482 (PVNNVDNGSQVQPNPSEVIELSDDDEDDNGDGETLD). Positions 343–353 (EAHKSDNEQRL) are enriched in basic and acidic residues. Polar residues predominate over residues 447–461 (PVNNVDNGSQVQPNP). Positions 466–480 (ELSDDDEDDNGDGET) are enriched in acidic residues. Residues 497 to 551 (KLNWLYKDPQGLVQGPFSLTQLKAWSDAEYFTKQFRVWMTGESMESAVLLTDVLR) enclose the GYF domain.

This is an uncharacterized protein from Arabidopsis thaliana (Mouse-ear cress).